The chain runs to 400 residues: Keratin, type I cytoskeletal 19 (400 aa).

The interval 1-79 (MTSYSYRQSS…TASDGLLAGN (79 aa)) is head. R7 carries the omega-N-methylarginine modification. 2 positions are modified to phosphoserine: S14 and S22. R24 is subject to Asymmetric dimethylarginine; alternate. Residue R24 is modified to Omega-N-methylarginine; alternate. R32 is modified (omega-N-methylarginine). A phosphoserine mark is found at S35 and S40. An omega-N-methylarginine mark is found at R43 and R51. 2 positions are modified to phosphoserine: S57 and S72. Positions 80-115 (EKLTMQNLNDRLASYLDKVRALEAANGELEVKIRDW) are coil 1A. The IF rod domain occupies 80-391 (EKLTMQNLND…SLLEGQEDHY (312 aa)). A linker 1 region spans residues 116 to 133 (YQKQGPGPSRDYSHYYTT). The segment at 134–225 (IQDLRDKILG…KNHEEEISTL (92 aa)) is coil 1B. The linker 12 stretch occupies residues 226 to 248 (RGQVGGQVSVEVDSAPGTDLAKI). The interval 244–390 (DLAKILSDMR…RSLLEGQEDH (147 aa)) is necessary for interaction with PNN. The coil 2 stretch occupies residues 249–387 (LSDMRSQYEV…ATYRSLLEGQ (139 aa)). A Phosphothreonine modification is found at T323. A rod-like helical tail region spans residues 388 to 400 (EDHYSNLSASKVL). Y391 carries the post-translational modification Phosphotyrosine. S395 bears the Phosphoserine mark.

It belongs to the intermediate filament family. As to quaternary structure, heterotetramer of two type I and two type II keratins. Interacts with PNN and the actin-binding domain of DMD.

Its function is as follows. Involved in the organization of myofibers. Together with KRT8, helps to link the contractile apparatus to dystrophin at the costameres of striated muscle. The sequence is that of Keratin, type I cytoskeletal 19 from Pongo abelii (Sumatran orangutan).